We begin with the raw amino-acid sequence, 410 residues long: Dihydrolipoyllysine-residue acetyltransferase component of pyruvate dehydrogenase complex (410 aa).

Residues 1–69 form the Lipoyl-binding domain; that stretch reads MPDIGTDLVE…TTGSLIAILN (69 aa). At Lys-35 the chain carries N6-lipoyllysine. The disordered stretch occupies residues 81–100; sequence SSSYSFKNSKNTSTNSNLGN. Residues 113–150 enclose the Peripheral subunit-binding (PSBD) domain; the sequence is HATPTVRRLARKFDIKLENITGTGRKGRILKEDVISYK. His-383 is a catalytic residue.

The protein belongs to the 2-oxoacid dehydrogenase family. In terms of assembly, forms a 24-polypeptide structural core with octahedral symmetry. Requires (R)-lipoate as cofactor.

The catalysed reaction is N(6)-[(R)-dihydrolipoyl]-L-lysyl-[protein] + acetyl-CoA = N(6)-[(R)-S(8)-acetyldihydrolipoyl]-L-lysyl-[protein] + CoA. Its function is as follows. The pyruvate dehydrogenase complex catalyzes the overall conversion of pyruvate to acetyl-CoA and CO(2). It contains multiple copies of three enzymatic components: pyruvate dehydrogenase (E1), dihydrolipoamide acetyltransferase (E2) and lipoamide dehydrogenase (E3). The polypeptide is Dihydrolipoyllysine-residue acetyltransferase component of pyruvate dehydrogenase complex (aceF) (Buchnera aphidicola subsp. Baizongia pistaciae (strain Bp)).